The sequence spans 571 residues: Proline--tRNA ligase (571 aa).

It belongs to the class-II aminoacyl-tRNA synthetase family. ProS type 1 subfamily. As to quaternary structure, homodimer.

Its subcellular location is the cytoplasm. It catalyses the reaction tRNA(Pro) + L-proline + ATP = L-prolyl-tRNA(Pro) + AMP + diphosphate. In terms of biological role, catalyzes the attachment of proline to tRNA(Pro) in a two-step reaction: proline is first activated by ATP to form Pro-AMP and then transferred to the acceptor end of tRNA(Pro). As ProRS can inadvertently accommodate and process non-cognate amino acids such as alanine and cysteine, to avoid such errors it has two additional distinct editing activities against alanine. One activity is designated as 'pretransfer' editing and involves the tRNA(Pro)-independent hydrolysis of activated Ala-AMP. The other activity is designated 'posttransfer' editing and involves deacylation of mischarged Ala-tRNA(Pro). The misacylated Cys-tRNA(Pro) is not edited by ProRS. The protein is Proline--tRNA ligase of Aliivibrio salmonicida (strain LFI1238) (Vibrio salmonicida (strain LFI1238)).